The chain runs to 197 residues: Imidazoleglycerol-phosphate dehydratase (197 aa).

The protein belongs to the imidazoleglycerol-phosphate dehydratase family.

The protein localises to the cytoplasm. It catalyses the reaction D-erythro-1-(imidazol-4-yl)glycerol 3-phosphate = 3-(imidazol-4-yl)-2-oxopropyl phosphate + H2O. The protein operates within amino-acid biosynthesis; L-histidine biosynthesis; L-histidine from 5-phospho-alpha-D-ribose 1-diphosphate: step 6/9. This is Imidazoleglycerol-phosphate dehydratase from Pseudomonas aeruginosa (strain LESB58).